The sequence spans 225 residues: Glutathione S-transferase Mu 3 (225 aa).

A GST N-terminal domain is found at 5 to 92 (SSMVLGYWDI…YIARKHNMCG (88 aa)). Glutathione contacts are provided by residues 11–12 (YW), 50–54 (WLDVK), and 63–64 (NL). Lys54 participates in a covalent cross-link: Glycyl lysine isopeptide (Lys-Gly) (interchain with G-Cter in SUMO2). Lys73 participates in a covalent cross-link: Glycyl lysine isopeptide (Lys-Gly) (interchain with G-Cter in SUMO2). A glutathione-binding site is contributed by 76-77 (QS). The 119-residue stretch at 94–212 (TEEEKIRVDI…QSDQFFKMPI (119 aa)) folds into the GST C-terminal domain. Tyr120 is a binding site for substrate.

It belongs to the GST superfamily. Mu family. Homodimer.

The protein resides in the cytoplasm. The enzyme catalyses RX + glutathione = an S-substituted glutathione + a halide anion + H(+). Functionally, conjugation of reduced glutathione to a wide number of exogenous and endogenous hydrophobic electrophiles. May govern uptake and detoxification of both endogenous compounds and xenobiotics at the testis and brain blood barriers. The polypeptide is Glutathione S-transferase Mu 3 (GSTM3) (Macaca fuscata fuscata (Japanese macaque)).